Reading from the N-terminus, the 461-residue chain is Protein YIG1 (461 aa).

The interval 58-80 is disordered; the sequence is SNVGEDGGDVGNYSEEDDDGDEE. Acidic residues predominate over residues 71–80; the sequence is SEEDDDGDEE.

The protein resides in the cytoplasm. The protein localises to the nucleus. Its function is as follows. Involved in the regulation of anaerobiotic glycerol metabolism. This is Protein YIG1 (YIG1) from Saccharomyces cerevisiae (strain ATCC 204508 / S288c) (Baker's yeast).